We begin with the raw amino-acid sequence, 122 residues long: Large ribosomal subunit protein uL14 (122 aa).

It belongs to the universal ribosomal protein uL14 family. In terms of assembly, part of the 50S ribosomal subunit. Forms a cluster with proteins L3 and L19. In the 70S ribosome, L14 and L19 interact and together make contacts with the 16S rRNA in bridges B5 and B8.

In terms of biological role, binds to 23S rRNA. Forms part of two intersubunit bridges in the 70S ribosome. The chain is Large ribosomal subunit protein uL14 from Synechococcus sp. (strain JA-3-3Ab) (Cyanobacteria bacterium Yellowstone A-Prime).